Here is a 352-residue protein sequence, read N- to C-terminus: UPF0324 membrane protein blr3189 (352 aa).

A run of 11 helical transmembrane segments spans residues 21 to 43 (IAAL…LLER), 53 to 71 (YVEA…RSFW), 88 to 110 (LLEV…ASGI), 114 to 136 (ASIA…LLGL), 143 to 165 (LIAC…IIGA), 175 to 197 (SFTA…LLQL), 204 to 226 (ILAG…AGLV), 236 to 253 (LMRV…SLVA), 265 to 284 (VGFF…LATL), 294 to 316 (VVGP…LGLG), and 329 to 351 (VTAA…VHWF).

Belongs to the UPF0324 family.

It is found in the cell membrane. The sequence is that of UPF0324 membrane protein blr3189 from Bradyrhizobium diazoefficiens (strain JCM 10833 / BCRC 13528 / IAM 13628 / NBRC 14792 / USDA 110).